Consider the following 27-residue polypeptide: Cationic protein C1 (27 aa).

The protein localises to the secreted. It localises to the nematocyst. The sequence is that of Cationic protein C1 from Bunodosoma caissarum (Sea anemone).